The chain runs to 463 residues: ATP-dependent protease ATPase subunit HslU (463 aa).

ATP contacts are provided by residues V21, 63–68 (GVGKTE), D276, E341, and R413.

Belongs to the ClpX chaperone family. HslU subfamily. In terms of assembly, a double ring-shaped homohexamer of HslV is capped on each side by a ring-shaped HslU homohexamer. The assembly of the HslU/HslV complex is dependent on binding of ATP.

It localises to the cytoplasm. Its function is as follows. ATPase subunit of a proteasome-like degradation complex; this subunit has chaperone activity. The binding of ATP and its subsequent hydrolysis by HslU are essential for unfolding of protein substrates subsequently hydrolyzed by HslV. HslU recognizes the N-terminal part of its protein substrates and unfolds these before they are guided to HslV for hydrolysis. The protein is ATP-dependent protease ATPase subunit HslU of Thermotoga sp. (strain RQ2).